A 216-amino-acid chain; its full sequence is uncharacterized protein (216 aa).

One can recognise an Integrase catalytic domain in the interval 54–215; that stretch reads TATQPNEKWT…SPVNYRTQSL (162 aa).

Belongs to the transposase IS3/IS150/IS904 family.

This is an uncharacterized protein from Haemophilus influenzae (strain ATCC 51907 / DSM 11121 / KW20 / Rd).